A 464-amino-acid polypeptide reads, in one-letter code: Alpha-1,6-mannosyl-glycoprotein 4-beta-N-acetylglucosaminyltransferase (464 aa).

Residues 1-10 (MRCSPKRSLT) lie on the Cytoplasmic side of the membrane. The helical; Signal-anchor for type II membrane protein transmembrane segment at 11 to 31 (AVIAASFLLLLLLLLLHRGSW) threads the bilayer. At 32-464 (QDPQEVQFRD…QSIGIWTAGT (433 aa)) the chain is on the lumenal side. Asn70 and Asn201 each carry an N-linked (GlcNAc...) asparagine glycan.

Belongs to the glycosyltransferase 54 family. The cofactor is a divalent metal cation. Highly expressed in oviduct, spleen, lung and colon.

Its subcellular location is the golgi apparatus membrane. The enzyme catalyses N(4)-{beta-D-GlcNAc-(1-&gt;2)-[beta-D-GlcNAc-(1-&gt;4)]-alpha-D-Man-(1-&gt;3)-[beta-D-GlcNAc-(1-&gt;2)-[beta-D-GlcNAc-(1-&gt;6)]-alpha-D-Man-(1-&gt;6)]-beta-D-Man-(1-&gt;4)-beta-D-GlcNAc-(1-&gt;4)-beta-D-GlcNAc}-L-asparaginyl-[protein] + UDP-N-acetyl-alpha-D-glucosamine = N(4)-{beta-D-GlcNAc-(1-&gt;2)-[beta-D-GlcNAc-(1-&gt;4)]-alpha-D-Man-(1-&gt;3)-[beta-D-GlcNAc-(1-&gt;2)-[beta-D-GlcNAc-(1-&gt;4)]-[beta-D-GlcNAc-(1-&gt;6)]-alpha-D-Man-(1-&gt;6)]-beta-D-Man-(1-&gt;4)-beta-D-GlcNAc-(1-&gt;4)-beta-D-GlcNAc}-L-asparaginyl-[protein] + UDP + H(+). It functions in the pathway protein modification; protein glycosylation. In terms of biological role, glycosyltransferase that catalyzes the transfer of GlcNAc to the Manalpha1-6 arm to form GlcNAcBeta1-4Manalpha1-6 linkage (also named 'GnT-VI' activity). May also participate in the transfer of N-acetylglucosamine (GlcNAc) to the core mannose residues of N-linked glycans by catalyzing the formation of the GlcNAcbeta1-4 branch on the GlcNAcbeta1-2Manalpha1-3 arm of the core structure of N-linked glycans. In Gallus gallus (Chicken), this protein is Alpha-1,6-mannosyl-glycoprotein 4-beta-N-acetylglucosaminyltransferase (MGAT4C).